Here is a 500-residue protein sequence, read N- to C-terminus: Probable cytosol aminopeptidase (500 aa).

Positions 268 and 273 each coordinate Mn(2+). Lysine 280 is a catalytic residue. Aspartate 291, aspartate 350, and glutamate 352 together coordinate Mn(2+). The active site involves arginine 354.

It belongs to the peptidase M17 family. Requires Mn(2+) as cofactor.

Its subcellular location is the cytoplasm. It carries out the reaction Release of an N-terminal amino acid, Xaa-|-Yaa-, in which Xaa is preferably Leu, but may be other amino acids including Pro although not Arg or Lys, and Yaa may be Pro. Amino acid amides and methyl esters are also readily hydrolyzed, but rates on arylamides are exceedingly low.. It catalyses the reaction Release of an N-terminal amino acid, preferentially leucine, but not glutamic or aspartic acids.. In terms of biological role, presumably involved in the processing and regular turnover of intracellular proteins. Catalyzes the removal of unsubstituted N-terminal amino acids from various peptides. The polypeptide is Probable cytosol aminopeptidase (Alkaliphilus metalliredigens (strain QYMF)).